The sequence spans 378 residues: Chaperone protein DnaJ (378 aa).

One can recognise a J domain in the interval 5-70 (DFYEVLGLSK…QKRAAYDQYG (66 aa)). A CR-type zinc finger spans residues 133-211 (GITKEIRIPT…CHGDGRVERY (79 aa)). Zn(2+) is bound by residues Cys-146, Cys-149, Cys-163, Cys-166, Cys-185, Cys-188, Cys-199, and Cys-202. CXXCXGXG motif repeat units lie at residues 146–153 (CDKCHGSG), 163–170 (CSTCHGAG), 185–192 (CPTCHGRG), and 199–206 (CSKCHGDG).

It belongs to the DnaJ family. Homodimer. It depends on Zn(2+) as a cofactor.

The protein localises to the cytoplasm. Functionally, participates actively in the response to hyperosmotic and heat shock by preventing the aggregation of stress-denatured proteins and by disaggregating proteins, also in an autonomous, DnaK-independent fashion. Unfolded proteins bind initially to DnaJ; upon interaction with the DnaJ-bound protein, DnaK hydrolyzes its bound ATP, resulting in the formation of a stable complex. GrpE releases ADP from DnaK; ATP binding to DnaK triggers the release of the substrate protein, thus completing the reaction cycle. Several rounds of ATP-dependent interactions between DnaJ, DnaK and GrpE are required for fully efficient folding. Also involved, together with DnaK and GrpE, in the DNA replication of plasmids through activation of initiation proteins. The sequence is that of Chaperone protein DnaJ from Proteus mirabilis (strain HI4320).